A 228-amino-acid chain; its full sequence is Cutinase (228 aa).

The signal sequence occupies residues 1–16; the sequence is MKFLSIISLAVSLVAA. Residues cysteine 49 and cysteine 129 are joined by a disulfide bond. Serine 140 (nucleophile) is an active-site residue. An intrachain disulfide couples cysteine 191 to cysteine 198. Aspartate 195 is a catalytic residue. The Proton donor/acceptor role is filled by histidine 208.

It belongs to the cutinase family. Post-translationally, the 2 disulfide bonds play a critical role in holding the catalytic residues in juxta-position; reduction of the disulfide bridges results in the complete inactivation of the enzyme.

The protein localises to the secreted. The enzyme catalyses cutin + H2O = cutin monomers.. With respect to regulation, partially inhibited by berberine; higher inhibitory effects are observed with longer chain polyester substrates. Functionally, catalyzes the hydrolysis of complex carboxylic polyesters found in the cell wall of plants. Degrades cutin, a macromolecule that forms the structure of the plant cuticle. Allows pathogenic fungi to penetrate through the cuticular barrier into the host plant during the initial stage of fungal infection. This chain is Cutinase (CUTA), found in Colletotrichum truncatum (Anthracnose fungus).